The primary structure comprises 59 residues: MKLSQVVVSAVAFTGLVSAANSSNSSSSKNAAQPIAGLNNGKVAGAAGVALAGALAFLI.

Positions 1–19 (MKLSQVVVSAVAFTGLVSA) are cleaved as a signal peptide.

It to yeast DDR2.

The chain is Protein HOR7 (HOR7) from Saccharomyces cerevisiae (strain ATCC 204508 / S288c) (Baker's yeast).